We begin with the raw amino-acid sequence, 924 residues long: Probable dipeptidyl-aminopeptidase B (924 aa).

The span at 1 to 12 (MPSTYSDDNTLR) shows a compositional bias: polar residues. Positions 1–102 (MPSTYSDDNT…RSNQRSSADG (102 aa)) are disordered. At 1–111 (MPSTYSDDNT…GQRMDRSLRR (111 aa)) the chain is on the cytoplasmic side. Over residues 14-23 (GLDRFRDHSP) the composition is skewed to basic and acidic residues. Over residues 31–43 (SQETDSTVSTTSI) the composition is skewed to polar residues. Residues 47 to 58 (RIQERLDTKEFP) show a composition bias toward basic and acidic residues. A compositionally biased stretch (low complexity) spans 87–100 (NASPSSRSNQRSSA). The chain crosses the membrane as a helical; Signal-anchor for type II membrane protein span at residues 112-132 (WLFIVSGALVATWVIGLIFFV). Residues 133 to 924 (SSKAYKPSSS…GMKRRALPTA (792 aa)) lie on the Vacuolar side of the membrane. N-linked (GlcNAc...) asparagine glycosylation is found at Asn-231 and Asn-364. Ser-768 (charge relay system) is an active-site residue. N-linked (GlcNAc...) asparagine glycosylation is present at Asn-827. Catalysis depends on charge relay system residues Asp-845 and His-878.

This sequence belongs to the peptidase S9B family.

Its subcellular location is the vacuole membrane. The catalysed reaction is Release of an N-terminal dipeptide, Xaa-Yaa-|-Zaa-, from a polypeptide, preferentially when Yaa is Pro, provided Zaa is neither Pro nor hydroxyproline.. Functionally, type IV dipeptidyl-peptidase which removes N-terminal dipeptides sequentially from polypeptides having unsubstituted N-termini provided that the penultimate residue is proline. This Neurospora crassa (strain ATCC 24698 / 74-OR23-1A / CBS 708.71 / DSM 1257 / FGSC 987) protein is Probable dipeptidyl-aminopeptidase B (dapB).